The primary structure comprises 805 residues: Leucine--tRNA ligase (805 aa).

The 'HIGH' region signature appears at 40 to 51 (PYPSGSGLHVGH). A 'KMSKS' region motif is present at residues 576 to 580 (KMSKS). Lysine 579 is an ATP binding site.

This sequence belongs to the class-I aminoacyl-tRNA synthetase family.

The protein localises to the cytoplasm. It catalyses the reaction tRNA(Leu) + L-leucine + ATP = L-leucyl-tRNA(Leu) + AMP + diphosphate. The sequence is that of Leucine--tRNA ligase from Chlorobium phaeovibrioides (strain DSM 265 / 1930) (Prosthecochloris vibrioformis (strain DSM 265)).